A 321-amino-acid polypeptide reads, in one-letter code: Cyclic AMP-AMP-AMP synthase (321 aa).

Lys63 contacts ATP. Mg(2+) is bound by residues Asp72 and Asp74. ATP contacts are provided by residues Asp74, His162, Lys185, 201 to 203, and Asn270; that span reads KSF.

The protein belongs to the CD-NTase family. A01 subfamily. Forms complexes with Cap7 with 1:1 and 2:2 stoichimetry, and a 1:1:6 CdnC:Cap7:Cap6 complex. Requires Mg(2+) as cofactor.

It catalyses the reaction 3 ATP = 3',3',3'-c-tri-AMP + 3 diphosphate. The enzyme catalyses 2 ATP = 3',3'-c-di-AMP + 2 diphosphate. Its activity is regulated as follows. The 2:2 CdnC:Cap7 (Cap7 is also called HORMA) complex is activated for cAAA synthesis by long dsDNA, but not 40 bp dsDNA or ssDNA; the 1:1 complex is inactive in vitro. The 2:2:DNA complex is catalytically disassembled and inactivated by Cap6 (also called Trip13). Cyclic nucleotide synthase (second messenger synthase) of a CBASS antivirus system. CBASS (cyclic oligonucleotide-based antiphage signaling system) provides immunity against bacteriophage. The CD-NTase protein synthesizes cyclic nucleotides in response to infection; these serve as specific second messenger signals. The signals activate a diverse range of effectors, leading to bacterial cell death and thus abortive phage infection. A type III-C(AAA) CBASS system. In terms of biological role, cyclic nucleotide synthase that upon activation catalyzes the synthesis of 3',3',3'-cyclic AMP-AMP-AMP (3',3',3'-c-tri-AMP or cAAA) as the major product, and 3',3'-c-di-AMP as a minor product. Cannot use GTP as a substrate. Functionally, protects E.coli strain JP313 against bacteriophage lambda cI- infection. When the cdnC-cap7-cap6-nucC operon is transformed into a susceptible strain it confers bacteriophage immunity. Mutations in the sensor (Cap7 also called HORMA) or effector proteins (CdnC, NucC) but not the disassembly protein (Cap6 also called Trip13) no longer confer immunity. The presence of the intact operon leads to culture collapse and cell death, which occurs before the phage has finished its replication cycle, thus protecting non-infected bacteria by aborting the phage infection and preventing its propagation. The polypeptide is Cyclic AMP-AMP-AMP synthase (Escherichia coli (strain MS 115-1)).